A 218-amino-acid polypeptide reads, in one-letter code: Pyridoxine/pyridoxamine 5'-phosphate oxidase (218 aa).

Residues 66 to 71, R87, K88, and Q110 contribute to the FMN site; that span reads RVVLLK. Residue K71 coordinates substrate. The substrate site is built by Y128, R132, and S136. Residues 145-146 and W190 contribute to the FMN site; that span reads QS. Position 196–198 (196–198) interacts with substrate; it reads RLH. Residue R200 coordinates FMN.

This sequence belongs to the pyridoxamine 5'-phosphate oxidase family. Homodimer. Requires FMN as cofactor.

It catalyses the reaction pyridoxamine 5'-phosphate + O2 + H2O = pyridoxal 5'-phosphate + H2O2 + NH4(+). It carries out the reaction pyridoxine 5'-phosphate + O2 = pyridoxal 5'-phosphate + H2O2. The protein operates within cofactor metabolism; pyridoxal 5'-phosphate salvage; pyridoxal 5'-phosphate from pyridoxamine 5'-phosphate: step 1/1. Its pathway is cofactor metabolism; pyridoxal 5'-phosphate salvage; pyridoxal 5'-phosphate from pyridoxine 5'-phosphate: step 1/1. In terms of biological role, catalyzes the oxidation of either pyridoxine 5'-phosphate (PNP) or pyridoxamine 5'-phosphate (PMP) into pyridoxal 5'-phosphate (PLP). This chain is Pyridoxine/pyridoxamine 5'-phosphate oxidase, found in Anaplasma marginale (strain St. Maries).